The chain runs to 60 residues: Large ribosomal subunit protein uL30 (60 aa).

Belongs to the universal ribosomal protein uL30 family. As to quaternary structure, part of the 50S ribosomal subunit.

The protein is Large ribosomal subunit protein uL30 of Cutibacterium acnes (strain DSM 16379 / KPA171202) (Propionibacterium acnes).